Here is a 374-residue protein sequence, read N- to C-terminus: Glutamate 5-kinase (374 aa).

K16 is a binding site for ATP. The substrate site is built by S56, D143, and N155. Residues 175–176 (TD) and 217–223 (SGGMLTK) each bind ATP. Residues 282–360 (RGALILDDGA…SNIGAILGYK (79 aa)) enclose the PUA domain.

This sequence belongs to the glutamate 5-kinase family.

Its subcellular location is the cytoplasm. The catalysed reaction is L-glutamate + ATP = L-glutamyl 5-phosphate + ADP. The protein operates within amino-acid biosynthesis; L-proline biosynthesis; L-glutamate 5-semialdehyde from L-glutamate: step 1/2. In terms of biological role, catalyzes the transfer of a phosphate group to glutamate to form L-glutamate 5-phosphate. This is Glutamate 5-kinase from Marinomonas sp. (strain MWYL1).